Reading from the N-terminus, the 653-residue chain is Zinc finger CCCH domain-containing protein 54 (653 aa).

The segment at 242 to 261 (NGGGGGGGSPARARRSNGLS) is disordered. The C3H1-type zinc-finger motif lies at 260-287 (LSTRRPCHYFSKGICKNGQNCHYSHHQV). The 84-residue stretch at 313-396 (SLETLEMEIT…GQHSVVLAED (84 aa)) folds into the HTH OST-type domain. The RRM domain maps to 422–497 (HQIYLTFPAE…SRVLVKPYRE (76 aa)). A coiled-coil region spans residues 537–565 (RLMRKQLAEKREMLLEMERRRATVRRLES). Positions 598 to 623 (PSLASPDPLEIVSNSQAPPTQAGNIY) are disordered. The span at 609–620 (VSNSQAPPTQAG) shows a compositional bias: polar residues.

The chain is Zinc finger CCCH domain-containing protein 54 from Oryza sativa subsp. japonica (Rice).